A 494-amino-acid polypeptide reads, in one-letter code: Nuclear distribution protein PAC1 (494 aa).

Residues 14–46 form the LisH domain; the sequence is QKNELDKSVLRYLNWNYKQTVRHEHAQDYESVR. Positions 90 to 123 form a coiled coil; that stretch reads NSIVRLQKKIIELEQNTETLVSQIKDLNTQVSEL. WD repeat units follow at residues 153–192, 196–244, 251–292, 295–334, 347–395, 415–454, and 457–492; these read NVES…IPLA, SHTK…CKFQ, GHEH…SLKT, PHSQ…SVGT, HFIE…LMAH, GHLS…HVWE, and HTGF…SNVF.

Belongs to the WD repeat LIS1/nudF family. In terms of assembly, self-associates. Interacts with NDL1 and dynein.

It localises to the cytoplasm. It is found in the cytoskeleton. The protein resides in the spindle pole. Functionally, positively regulates the activity of the minus-end directed microtubule motor protein dynein. Plays a central role in positioning the mitotic spindle at the bud neck during cell division. Targets cytoplasmic dynein to microtubule plus ends, thereby promoting dynein-mediated microtubule sliding along the bud cortex and consequently the movement of the mitotic spindle to the bud neck. The polypeptide is Nuclear distribution protein PAC1 (Saccharomyces cerevisiae (strain YJM789) (Baker's yeast)).